Here is a 501-residue protein sequence, read N- to C-terminus: 2,3-bisphosphoglycerate-independent phosphoglycerate mutase (501 aa).

Mn(2+) contacts are provided by aspartate 12 and serine 62. The active-site Phosphoserine intermediate is the serine 62. Residues histidine 121, 150–151, arginine 182, arginine 188, 253–256, and lysine 323 each bind substrate; these read RD and RSDR. Positions 390, 394, 431, 432, and 450 each coordinate Mn(2+).

Belongs to the BPG-independent phosphoglycerate mutase family. As to quaternary structure, monomer. Mn(2+) serves as cofactor.

It carries out the reaction (2R)-2-phosphoglycerate = (2R)-3-phosphoglycerate. Its pathway is carbohydrate degradation; glycolysis; pyruvate from D-glyceraldehyde 3-phosphate: step 3/5. Functionally, catalyzes the interconversion of 2-phosphoglycerate and 3-phosphoglycerate. This chain is 2,3-bisphosphoglycerate-independent phosphoglycerate mutase, found in Ehrlichia canis (strain Jake).